The following is a 359-amino-acid chain: Guanine nucleotide-binding protein G(q) subunit alpha (359 aa).

Residues cysteine 9 and cysteine 10 are each lipidated (S-palmitoyl cysteine). The G-alpha domain maps to 38-359; that stretch reads RELKLLLLGT…QLNLKEYNLV (322 aa). A G1 motif region spans residues 41 to 54; sequence KLLLLGTGESGKST. GTP contacts are provided by serine 50, glycine 51, lysine 52, serine 53, threonine 54, serine 156, leucine 180, arginine 181, and arginine 183. Serine 53 serves as a coordination point for Mg(2+). The tract at residues 178–186 is G2 motif; it reads DVLRVRVPT. Threonine 186 provides a ligand contact to Mg(2+). Residues 201–210 form a G3 motif region; it reads FRMVDVGGQR. Glutamine 209 bears the 5-glutamyl histamine mark. The tract at residues 270 to 277 is G4 motif; sequence ILFLNKKD. GTP-binding residues include asparagine 274, lysine 275, aspartate 277, and alanine 331. Residues 329–334 form a G5 motif region; the sequence is TCATDT.

Belongs to the G-alpha family. G(q) subfamily. G proteins are composed of 3 units; alpha, beta and gamma. The alpha chain contains the guanine nucleotide binding site. Interacts (GDP-bound form) with RIC8A (via C-terminus); promoting GNAQ folding and association with the plasma membrane. Binds NHERF1. Forms a complex with PECAM1 and BDKRB2. Interacts with GAS2L2. Palmitoylated by ZDHHC3 and ZDHHC7. Palmitoylation occurs in the Golgi and participates in the localization of GNAQ to the plasma membrane. Post-translationally, histaminylated at Gln-209 residues by TGM2.

Its subcellular location is the cell membrane. It localises to the golgi apparatus. The protein resides in the nucleus. It is found in the nucleus membrane. The enzyme catalyses GTP + H2O = GDP + phosphate + H(+). Guanine nucleotide-binding proteins (G proteins) function as transducers downstream of G protein-coupled receptors (GPCRs) in numerous signaling cascades. The alpha chain contains the guanine nucleotide binding site and alternates between an active, GTP-bound state and an inactive, GDP-bound state. Signaling by an activated GPCR promotes GDP release and GTP binding. The alpha subunit has a low GTPase activity that converts bound GTP to GDP, thereby terminating the signal. Both GDP release and GTP hydrolysis are modulated by numerous regulatory proteins. Signaling is mediated via phospholipase C-beta-dependent inositol lipid hydrolysis for signal propagation: activates phospholipase C-beta: following GPCR activation, GNAQ activates PLC-beta (PLCB1, PLCB2, PLCB3 or PLCB4), leading to production of diacylglycerol (DAG) and inositol 1,4,5-trisphosphate (IP3). Required for platelet activation. Regulates B-cell selection and survival and is required to prevent B-cell-dependent autoimmunity. Regulates chemotaxis of BM-derived neutrophils and dendritic cells (in vitro). Transduces FFAR4 signaling in response to long-chain fatty acids (LCFAs). Together with GNA11, required for heart development. In Mus musculus (Mouse), this protein is Guanine nucleotide-binding protein G(q) subunit alpha (Gnaq).